The following is a 234-amino-acid chain: Protein-toxin resistance protein KTD1 (234 aa).

Over 1-47 the chain is Cytoplasmic; that stretch reads MQTPSENTDVKMDTLDEPSAHLIEENVALPEDTFSSHLSYVLYEIAH. Residues 48-68 traverse the membrane as a helical segment; sequence CKPIMFMIIIIVSLISLIVLF. Residues 68 to 75 are required for resistance to killer toxin K28, a protein-toxin encoded by the M28 virus; sequence FHDNDGCT. Residues 69-76 are Extracellular-facing; it reads HDNDGCTV. Residues 77–97 form a helical membrane-spanning segment; that stretch reads ILVMSLIVASMALMVVAAFTF. The Cytoplasmic segment spans residues 98-234; it reads GKAITEQEFM…RKQYPDADLP (137 aa). The required for resistance to killer toxin K28, a protein-toxin encoded by the M28 virus stretch occupies residues 147–234; it reads FYSGKKCHEF…RKQYPDADLP (88 aa). The tract at residues 168 to 187 is disordered; that stretch reads SHSDSSSNSAEDTQSPVSAG. The span at 177–187 shows a compositional bias: polar residues; the sequence is AEDTQSPVSAG. Lys217 participates in a covalent cross-link: Glycyl lysine isopeptide (Lys-Gly) (interchain with G-Cter in ubiquitin).

This sequence belongs to the DUP/COS family.

The protein localises to the vacuole membrane. Its subcellular location is the golgi apparatus. It localises to the trans-Golgi network membrane. The protein resides in the endosome membrane. Its function is as follows. Confers resistance to killer toxin K28, a protein-toxin encoded by the M28 virus that uses S.cerevisiae as a host. Probably acts against K28 after endocytosis of the protein-toxin. The chain is Protein-toxin resistance protein KTD1 from Saccharomyces cerevisiae (strain ATCC 204508 / S288c) (Baker's yeast).